Here is a 243-residue protein sequence, read N- to C-terminus: UPF0246 protein SpyM3_1790 (243 aa).

It belongs to the UPF0246 family.

This is UPF0246 protein SpyM3_1790 from Streptococcus pyogenes serotype M3 (strain ATCC BAA-595 / MGAS315).